We begin with the raw amino-acid sequence, 197 residues long: Potassium-transporting ATPase KdpC subunit (197 aa).

The chain crosses the membrane as a helical span at residues Pro-7–Val-27.

The protein belongs to the KdpC family. The system is composed of three essential subunits: KdpA, KdpB and KdpC.

The protein resides in the cell inner membrane. Part of the high-affinity ATP-driven potassium transport (or Kdp) system, which catalyzes the hydrolysis of ATP coupled with the electrogenic transport of potassium into the cytoplasm. This subunit acts as a catalytic chaperone that increases the ATP-binding affinity of the ATP-hydrolyzing subunit KdpB by the formation of a transient KdpB/KdpC/ATP ternary complex. In Beijerinckia indica subsp. indica (strain ATCC 9039 / DSM 1715 / NCIMB 8712), this protein is Potassium-transporting ATPase KdpC subunit.